Consider the following 204-residue polypeptide: Apoptosis regulator R11 (204 aa).

The short motif at Glu-101–Arg-120 is the BH1 element. A BH2 motif is present at residues Pro-152 to Tyr-167. The helical transmembrane segment at Arg-181 to Val-198 threads the bilayer.

Belongs to the Bcl-2 family.

Its subcellular location is the membrane. In terms of biological role, confers strong protection against cell death. The polypeptide is Apoptosis regulator R11 (Xenopus laevis (African clawed frog)).